A 110-amino-acid polypeptide reads, in one-letter code: Large ribosomal subunit protein uL22 (110 aa).

The protein belongs to the universal ribosomal protein uL22 family. In terms of assembly, part of the 50S ribosomal subunit.

In terms of biological role, this protein binds specifically to 23S rRNA; its binding is stimulated by other ribosomal proteins, e.g. L4, L17, and L20. It is important during the early stages of 50S assembly. It makes multiple contacts with different domains of the 23S rRNA in the assembled 50S subunit and ribosome. Functionally, the globular domain of the protein is located near the polypeptide exit tunnel on the outside of the subunit, while an extended beta-hairpin is found that lines the wall of the exit tunnel in the center of the 70S ribosome. The polypeptide is Large ribosomal subunit protein uL22 (Saccharophagus degradans (strain 2-40 / ATCC 43961 / DSM 17024)).